The following is a 405-amino-acid chain: S-adenosylmethionine sensor upstream of mTORC1 (405 aa).

The segment at 1-34 (MEPGAGGRNTARAQRAGSPNTPPPREQERKLEQE) is disordered. A compositionally biased stretch (basic and acidic residues) spans 25 to 34 (REQERKLEQE). Residues Arg-95, Gly-172, Asp-190, Asp-202, Phe-203, and Ser-244 each contribute to the S-adenosyl-L-methionine site.

The protein belongs to the BMT2/SAMTOR family. Interacts with the DEPDC5 subunit of the GATOR1 complex; interaction is disrupted when SAMTOR binds S-adenosyl-L-methionine. Interacts with the KICSTOR complex; interaction is disrupted when SAMTOR binds S-adenosyl-L-methionine.

Its function is as follows. S-adenosyl-L-methionine-binding protein that acts as an inhibitor of mTORC1 signaling via interaction with the GATOR1 and KICSTOR complexes. Acts as a sensor of S-adenosyl-L-methionine to signal methionine sufficiency to mTORC1: in presence of methionine, binds S-adenosyl-L-methionine, leading to disrupt interaction with the GATOR1 and KICSTOR complexes and promote mTORC1 signaling. Upon methionine starvation, S-adenosyl-L-methionine levels are reduced, thereby promoting the association with GATOR1 and KICSTOR, leading to inhibit mTORC1 signaling. Probably also acts as a S-adenosyl-L-methionine-dependent methyltransferase (Potential). This Homo sapiens (Human) protein is S-adenosylmethionine sensor upstream of mTORC1.